The chain runs to 201 residues: Peptidyl-tRNA hydrolase (201 aa).

Tyr-14 is a binding site for tRNA. Catalysis depends on His-19, which acts as the Proton acceptor. TRNA is bound by residues Tyr-64, Asn-66, and Asn-113. Residues 178-201 (PGPAMNRFNRKPEPPESGGEVAAK) form a disordered region.

Belongs to the PTH family. Monomer.

It localises to the cytoplasm. It catalyses the reaction an N-acyl-L-alpha-aminoacyl-tRNA + H2O = an N-acyl-L-amino acid + a tRNA + H(+). In terms of biological role, hydrolyzes ribosome-free peptidyl-tRNAs (with 1 or more amino acids incorporated), which drop off the ribosome during protein synthesis, or as a result of ribosome stalling. Catalyzes the release of premature peptidyl moieties from peptidyl-tRNA molecules trapped in stalled 50S ribosomal subunits, and thus maintains levels of free tRNAs and 50S ribosomes. This is Peptidyl-tRNA hydrolase from Koribacter versatilis (strain Ellin345).